The primary structure comprises 222 residues: Glutathione S-transferase A1 (222 aa).

At Met-1 the chain carries N-acetylmethionine. Residue Ala-2 is modified to N-acetylalanine; in Glutathione S-transferase A1, N-terminally processed. The GST N-terminal domain occupies 3–83 (EKPKLHYFNA…YIASKYNLYG (81 aa)). Lys-4 bears the N6-succinyllysine mark. Residues Tyr-9, Arg-45, 54–55 (QV), and 67–68 (QT) each bind glutathione. The GST C-terminal domain occupies 85 to 207 (DIKERALIDM…LQPGSPRKPP (123 aa)).

It belongs to the GST superfamily. Alpha family. In terms of assembly, homodimer or heterodimer of GSTA1 and GSTA2. As to expression, liver.

Its subcellular location is the cytoplasm. The catalysed reaction is RX + glutathione = an S-substituted glutathione + a halide anion + H(+). It catalyses the reaction prostaglandin A2 + glutathione = prostaglandin A2-S-(R)-glutathione. It carries out the reaction prostaglandin J2 + glutathione = prostaglandin J2-S-(R)-glutathione. The enzyme catalyses (13S)-hydroperoxy-(9Z,11E)-octadecadienoate + 2 glutathione = (13S)-hydroxy-(9Z,11E)-octadecadienoate + glutathione disulfide + H2O. The catalysed reaction is androst-5-ene-3,17-dione = androst-4-ene-3,17-dione. Its activity is regulated as follows. The isomerase activity is inhibited by S-methylglutathione (GSMe). Its function is as follows. Glutathione S-transferase that catalyzes the nucleophilic attack of the sulfur atom of glutathione on the electrophilic groups of a wide range of exogenous and endogenous compounds. Involved in the formation of glutathione conjugates of both prostaglandin A2 (PGA2) and prostaglandin J2 (PGJ2). It also catalyzes the isomerization of D5-androstene-3,17-dione (AD) into D4-androstene-3,17-dione and may therefore play an important role in hormone biosynthesis. Through its glutathione-dependent peroxidase activity toward the fatty acid hydroperoxide (13S)-hydroperoxy-(9Z,11E)-octadecadienoate/13-HPODE it is also involved in the metabolism of oxidized linoleic acid. The polypeptide is Glutathione S-transferase A1 (GSTA1) (Homo sapiens (Human)).